The following is an 80-amino-acid chain: U19-lycotoxin-Ls1a (80 aa).

An N-terminal signal peptide occupies residues methionine 1 to alanine 22. A propeptide spanning residues glutamine 23–arginine 34 is cleaved from the precursor. 4 cysteine pairs are disulfide-bonded: cysteine 36–cysteine 50, cysteine 43–cysteine 55, cysteine 49–cysteine 66, and cysteine 57–cysteine 64.

It belongs to the neurotoxin 02 (plectoxin) family. 05 (U19-lycotoxin) subfamily. As to expression, expressed by the venom gland.

Its subcellular location is the secreted. This chain is U19-lycotoxin-Ls1a, found in Lycosa singoriensis (Wolf spider).